The chain runs to 513 residues: GMP synthase [glutamine-hydrolyzing] (513 aa).

The 190-residue stretch at 9–198 (LILVLDFGSQ…VRRVCNCTGE (190 aa)) folds into the Glutamine amidotransferase type-1 domain. Catalysis depends on C86, which acts as the Nucleophile. Residues H172 and E174 contribute to the active site. Residues 199 to 388 (WTMENFIEIE…LGIPEHLVWR (190 aa)) enclose the GMPS ATP-PPase domain. ATP is bound at residue 226 to 232 (SGGVDSS).

As to quaternary structure, homodimer.

It catalyses the reaction XMP + L-glutamine + ATP + H2O = GMP + L-glutamate + AMP + diphosphate + 2 H(+). It participates in purine metabolism; GMP biosynthesis; GMP from XMP (L-Gln route): step 1/1. In terms of biological role, catalyzes the synthesis of GMP from XMP. In Staphylococcus epidermidis (strain ATCC 35984 / DSM 28319 / BCRC 17069 / CCUG 31568 / BM 3577 / RP62A), this protein is GMP synthase [glutamine-hydrolyzing].